A 597-amino-acid polypeptide reads, in one-letter code: Elongation factor 4 (597 aa).

A tr-type G domain is found at 2–184 (DHIRNFSIIA…ALIAKVPPPK (183 aa)). GTP contacts are provided by residues 14-19 (DHGKST) and 131-134 (NKID).

This sequence belongs to the TRAFAC class translation factor GTPase superfamily. Classic translation factor GTPase family. LepA subfamily.

The protein resides in the cell inner membrane. It catalyses the reaction GTP + H2O = GDP + phosphate + H(+). Functionally, required for accurate and efficient protein synthesis under certain stress conditions. May act as a fidelity factor of the translation reaction, by catalyzing a one-codon backward translocation of tRNAs on improperly translocated ribosomes. Back-translocation proceeds from a post-translocation (POST) complex to a pre-translocation (PRE) complex, thus giving elongation factor G a second chance to translocate the tRNAs correctly. Binds to ribosomes in a GTP-dependent manner. This chain is Elongation factor 4, found in Cupriavidus taiwanensis (strain DSM 17343 / BCRC 17206 / CCUG 44338 / CIP 107171 / LMG 19424 / R1) (Ralstonia taiwanensis (strain LMG 19424)).